Here is a 302-residue protein sequence, read N- to C-terminus: Putative beta-glucosidase 17 (302 aa).

Residues 1-27 (MMAVAAATRIAVVVVAALAALAPGARG) form the signal peptide. A beta-D-glucoside contacts are provided by residues Gln47, His149, and 194-195 (NE). Glu195 serves as the catalytic Proton donor. A disulfide bond links Cys214 and Cys221. Residue Asn274 is glycosylated (N-linked (GlcNAc...) asparagine).

This sequence belongs to the glycosyl hydrolase 1 family.

The enzyme catalyses Hydrolysis of terminal, non-reducing beta-D-glucosyl residues with release of beta-D-glucose.. In Oryza sativa subsp. japonica (Rice), this protein is Putative beta-glucosidase 17 (BGLU17).